We begin with the raw amino-acid sequence, 209 residues long: Large ribosomal subunit protein uL3 (209 aa).

Gln-150 bears the N5-methylglutamine mark.

This sequence belongs to the universal ribosomal protein uL3 family. As to quaternary structure, part of the 50S ribosomal subunit. Forms a cluster with proteins L14 and L19. Post-translationally, methylated by PrmB.

In terms of biological role, one of the primary rRNA binding proteins, it binds directly near the 3'-end of the 23S rRNA, where it nucleates assembly of the 50S subunit. This chain is Large ribosomal subunit protein uL3, found in Cronobacter sakazakii (strain ATCC BAA-894) (Enterobacter sakazakii).